A 542-amino-acid polypeptide reads, in one-letter code: Chaperonin GroEL 1 (542 aa).

ATP contacts are provided by residues 30 to 33 (TLGP), Lys51, 87 to 91 (DGTTT), Gly415, and Asp496.

This sequence belongs to the chaperonin (HSP60) family. Forms a cylinder of 14 subunits composed of two heptameric rings stacked back-to-back. Interacts with the co-chaperonin GroES.

Its subcellular location is the cytoplasm. It catalyses the reaction ATP + H2O + a folded polypeptide = ADP + phosphate + an unfolded polypeptide.. Together with its co-chaperonin GroES, plays an essential role in assisting protein folding. The GroEL-GroES system forms a nano-cage that allows encapsulation of the non-native substrate proteins and provides a physical environment optimized to promote and accelerate protein folding. The sequence is that of Chaperonin GroEL 1 from Sinorhizobium fredii (strain NBRC 101917 / NGR234).